The primary structure comprises 79 residues: Acyl carrier protein (79 aa).

One can recognise a Carrier domain in the interval 2 to 77 (SEVADKVKKI…DAVEYIEKQK (76 aa)). Serine 37 bears the O-(pantetheine 4'-phosphoryl)serine mark.

It belongs to the acyl carrier protein (ACP) family. In terms of processing, 4'-phosphopantetheine is transferred from CoA to a specific serine of apo-ACP by AcpS. This modification is essential for activity because fatty acids are bound in thioester linkage to the sulfhydryl of the prosthetic group.

It localises to the cytoplasm. Its pathway is lipid metabolism; fatty acid biosynthesis. Functionally, carrier of the growing fatty acid chain in fatty acid biosynthesis. In Granulibacter bethesdensis (strain ATCC BAA-1260 / CGDNIH1), this protein is Acyl carrier protein.